The chain runs to 441 residues: NADH-quinone oxidoreductase subunit D 1 (441 aa).

The protein belongs to the complex I 49 kDa subunit family. NDH-1 is composed of 14 different subunits. Subunits NuoB, C, D, E, F, and G constitute the peripheral sector of the complex.

It is found in the cell membrane. The enzyme catalyses a quinone + NADH + 5 H(+)(in) = a quinol + NAD(+) + 4 H(+)(out). Functionally, NDH-1 shuttles electrons from NADH, via FMN and iron-sulfur (Fe-S) centers, to quinones in the respiratory chain. The immediate electron acceptor for the enzyme in this species is believed to be a menaquinone. Couples the redox reaction to proton translocation (for every two electrons transferred, four hydrogen ions are translocated across the cytoplasmic membrane), and thus conserves the redox energy in a proton gradient. This is NADH-quinone oxidoreductase subunit D 1 from Salinispora arenicola (strain CNS-205).